The primary structure comprises 189 residues: FUN14 domain-containing protein 2 (189 aa).

Residues 1–80 lie on the Cytoplasmic side of the membrane; the sequence is METSAPRAGS…GQESGPSAEK (80 aa). Serine 10 and serine 53 each carry phosphoserine. Residues 81–101 traverse the membrane as a helical segment; that stretch reads YSVATQLFIGGVTGWCTGFIF. The Mitochondrial intermembrane portion of the chain corresponds to 102 to 107; the sequence is QNVGKL. A helical transmembrane segment spans residues 108–128; the sequence is AATAVGGGFFLLQLANHTGYI. At 129 to 164 the chain is on the cytoplasmic side; that stretch reads KVDWQRVEKDMKKAKEQLKIRKSNQMPTEVRSKAEE. Phosphoserine is present on serine 151. The chain crosses the membrane as a helical span at residues 165 to 185; sequence VVSFVKKNVLVTGGFFGGFLL. Over 186 to 189 the chain is Mitochondrial intermembrane; sequence GMAS.

This sequence belongs to the FUN14 family.

It is found in the mitochondrion outer membrane. The protein localises to the nucleus. In terms of biological role, binds directly and specifically 1,2-Diacyl-sn-glycero-3-phospho-(1'-myo-inositol-3',4',5'-bisphosphate) (PIP3) leading to the recruitment of PIP3 to mitochondria and may play a role in the regulation of the platelet activation via AKT/GSK3B/cGMP signaling pathways. May act as transcription factor that regulates SREBP1 (isoform SREBP-1C) expression in order to modulate triglyceride (TG) homeostasis in hepatocytes. In Macaca mulatta (Rhesus macaque), this protein is FUN14 domain-containing protein 2.